A 284-amino-acid polypeptide reads, in one-letter code: tRNA dimethylallyltransferase (284 aa).

Residue 6–13 (GPTASGKS) participates in ATP binding. 8 to 13 (TASGKS) provides a ligand contact to substrate. The tract at residues 31–34 (DSLS) is interaction with substrate tRNA.

The protein belongs to the IPP transferase family. In terms of assembly, monomer. The cofactor is Mg(2+).

It catalyses the reaction adenosine(37) in tRNA + dimethylallyl diphosphate = N(6)-dimethylallyladenosine(37) in tRNA + diphosphate. Catalyzes the transfer of a dimethylallyl group onto the adenine at position 37 in tRNAs that read codons beginning with uridine, leading to the formation of N6-(dimethylallyl)adenosine (i(6)A). The sequence is that of tRNA dimethylallyltransferase from Nautilia profundicola (strain ATCC BAA-1463 / DSM 18972 / AmH).